The chain runs to 242 residues: MRCFKATIAYDGAYFLGYAKQPNKLGVQDKIESALNALGIKSAVIAAGRTDKGVHANNQVLSFHAPKHWSADKLFYYLAPKLAPHIVLKKLEEKNFHARFDAQKRAYRYLLTKNLKTPFLAPYIACGDYGSLDLLNTALKQFTGKHDFSLFKKEGGATTNPNRIIFNAFAYTTFIMGHECVVFKIIGDAFLRSSVRLIIQACVQYSLEKITLAEIQMQIHNLKATIRTPIMANGLYLHRVYY.

The active-site Nucleophile is Asp51. Tyr107 provides a ligand contact to substrate.

This sequence belongs to the tRNA pseudouridine synthase TruA family. Homodimer.

The enzyme catalyses uridine(38/39/40) in tRNA = pseudouridine(38/39/40) in tRNA. Its function is as follows. Formation of pseudouridine at positions 38, 39 and 40 in the anticodon stem and loop of transfer RNAs. In Helicobacter pylori (strain P12), this protein is tRNA pseudouridine synthase A.